The sequence spans 226 residues: Phosphoglycolate phosphatase (226 aa).

The active-site Nucleophile is the Asp-10. 3 residues coordinate Mg(2+): Asp-10, Asp-12, and Asp-175.

Belongs to the HAD-like hydrolase superfamily. CbbY/CbbZ/Gph/YieH family. Mg(2+) is required as a cofactor.

The enzyme catalyses 2-phosphoglycolate + H2O = glycolate + phosphate. Its pathway is organic acid metabolism; glycolate biosynthesis; glycolate from 2-phosphoglycolate: step 1/1. Functionally, specifically catalyzes the dephosphorylation of 2-phosphoglycolate. Is involved in the dissimilation of the intracellular 2-phosphoglycolate formed during the DNA repair of 3'-phosphoglycolate ends, a major class of DNA lesions induced by oxidative stress. The sequence is that of Phosphoglycolate phosphatase from Vibrio cholerae serotype O1 (strain ATCC 39315 / El Tor Inaba N16961).